The sequence spans 479 residues: uncharacterized protein (479 aa).

Residues 180–203 are disordered; the sequence is LGGEHSDSTNTELANPSSTTTRIT. Positions 187-202 are enriched in polar residues; it reads STNTELANPSSTTTRI. The PE-PPE domain maps to 240-462; it reads PGTTPEVVSY…LKPLVDAGYS (223 aa).

It belongs to the mycobacterial PPE family.

This is an uncharacterized protein from Mycobacterium tuberculosis (strain CDC 1551 / Oshkosh).